The chain runs to 329 residues: D-alanine--D-alanine ligase (329 aa).

The ATP-grasp domain maps to 120-326 (KLWYDALDIP…FHEFLEDCIN (207 aa)). Position 150–205 (150–205 (AFEKWGKVFVKAARQGSSVGCYSVAEKQAIAKAVNDAFGYSDQVLVEKAVKPRELE)) interacts with ATP. The Mg(2+) site is built by Asp-280, Glu-293, and Asn-295.

It belongs to the D-alanine--D-alanine ligase family. It depends on Mg(2+) as a cofactor. The cofactor is Mn(2+).

The protein localises to the cytoplasm. The enzyme catalyses 2 D-alanine + ATP = D-alanyl-D-alanine + ADP + phosphate + H(+). It participates in cell wall biogenesis; peptidoglycan biosynthesis. In terms of biological role, cell wall formation. This Vibrio parahaemolyticus serotype O3:K6 (strain RIMD 2210633) protein is D-alanine--D-alanine ligase.